The primary structure comprises 432 residues: Glutamyl-tRNA reductase (432 aa).

Substrate contacts are provided by residues 55–58 (TCNR), Ser114, 119–121 (ETQ), and Gln125. Catalysis depends on Cys56, which acts as the Nucleophile. Residue 194 to 199 (GAGEMI) coordinates NADP(+).

Belongs to the glutamyl-tRNA reductase family. Homodimer.

It carries out the reaction (S)-4-amino-5-oxopentanoate + tRNA(Glu) + NADP(+) = L-glutamyl-tRNA(Glu) + NADPH + H(+). The protein operates within porphyrin-containing compound metabolism; protoporphyrin-IX biosynthesis; 5-aminolevulinate from L-glutamyl-tRNA(Glu): step 1/2. In terms of biological role, catalyzes the NADPH-dependent reduction of glutamyl-tRNA(Glu) to glutamate 1-semialdehyde (GSA). The protein is Glutamyl-tRNA reductase of Burkholderia ambifaria (strain MC40-6).